The sequence spans 293 residues: Ribosomal protein L11 methyltransferase (293 aa).

Residues Thr145, Gly166, Asp188, and Asn230 each coordinate S-adenosyl-L-methionine.

Belongs to the methyltransferase superfamily. PrmA family.

Its subcellular location is the cytoplasm. It carries out the reaction L-lysyl-[protein] + 3 S-adenosyl-L-methionine = N(6),N(6),N(6)-trimethyl-L-lysyl-[protein] + 3 S-adenosyl-L-homocysteine + 3 H(+). Its function is as follows. Methylates ribosomal protein L11. This Citrobacter koseri (strain ATCC BAA-895 / CDC 4225-83 / SGSC4696) protein is Ribosomal protein L11 methyltransferase.